The following is a 246-amino-acid chain: tRNA (guanine-N(7)-)-methyltransferase (246 aa).

S-adenosyl-L-methionine is bound by residues Glu77, Glu102, Asp129, and Asp152. Asp152 is a catalytic residue. Residues Lys156, Asp188, and 225–228 each bind substrate; that span reads TKFE.

It belongs to the class I-like SAM-binding methyltransferase superfamily. TrmB family.

It carries out the reaction guanosine(46) in tRNA + S-adenosyl-L-methionine = N(7)-methylguanosine(46) in tRNA + S-adenosyl-L-homocysteine. Its pathway is tRNA modification; N(7)-methylguanine-tRNA biosynthesis. Catalyzes the formation of N(7)-methylguanine at position 46 (m7G46) in tRNA. This is tRNA (guanine-N(7)-)-methyltransferase from Haemophilus influenzae (strain 86-028NP).